A 543-amino-acid polypeptide reads, in one-letter code: Telomerase Cajal body protein 1 homolog (543 aa).

A disordered region spans residues 95-128 (GRPKNAVESPHAGVPMETSLAAEEEANGDEEEES). A compositionally biased stretch (acidic residues) spans 116-127 (AEEEANGDEEEE). WD repeat units follow at residues 237–283 (PEGG…LRCS), 291–329 (DEVMAAISLAFSHDGEQIYAGYKRCIKIFDTSRPGRFCD), and 378–421 (GHKG…QPLV).

The protein belongs to the TCAB1 family.

It is found in the nucleus. It localises to the cajal body. In terms of biological role, RNA chaperone that plays a key role in Cajal body formation. Specifically recognizes and binds the Cajal body box (CAB box) present in both small Cajal body RNAs (scaRNAs). Probably acts by mediating localization of scaRNAs to Cajal bodies. This is Telomerase Cajal body protein 1 homolog from Drosophila melanogaster (Fruit fly).